Consider the following 523-residue polypeptide: NAD(P)H-quinone oxidoreductase subunit 2 (523 aa).

The next 14 helical transmembrane spans lie at 29–49, 57–77, 94–114, 123–143, 147–167, 182–202, 223–243, 255–275, 291–311, 317–337, 345–365, 389–409, 424–444, and 477–497; these read AIAP…VDLA, WVPP…AQQW, LAIS…LISW, PIGE…LLCG, LVSV…LAGY, LLVG…LYGL, AALS…AVPF, PTPV…ALAL, LLFT…ALAQ, MLAY…VCGT, VLYM…IILF, LGLS…GFFG, LLVV…ISVI, and IALV…NPLF.

Belongs to the complex I subunit 2 family. In terms of assembly, NDH-1 can be composed of about 15 different subunits; different subcomplexes with different compositions have been identified which probably have different functions.

It localises to the cellular thylakoid membrane. It carries out the reaction a plastoquinone + NADH + (n+1) H(+)(in) = a plastoquinol + NAD(+) + n H(+)(out). It catalyses the reaction a plastoquinone + NADPH + (n+1) H(+)(in) = a plastoquinol + NADP(+) + n H(+)(out). Functionally, NDH-1 shuttles electrons from an unknown electron donor, via FMN and iron-sulfur (Fe-S) centers, to quinones in the respiratory and/or the photosynthetic chain. The immediate electron acceptor for the enzyme in this species is believed to be plastoquinone. Couples the redox reaction to proton translocation, and thus conserves the redox energy in a proton gradient. Cyanobacterial NDH-1 also plays a role in inorganic carbon-concentration. The sequence is that of NAD(P)H-quinone oxidoreductase subunit 2 from Prochlorococcus marinus (strain MIT 9313).